Consider the following 884-residue polypeptide: Androgen receptor (884 aa).

The segment at 1–522 (MEVQLGLGRV…PIDYYFPPQK (522 aa)) is modulating. Residues 1 to 551 (MEVQLGLGRV…GSCKVFFKRA (551 aa)) form an interaction with ZNF318 region. 2 disordered regions span residues 33 to 145 (VIQN…TLSL) and 174 to 207 (QQQQ…YLGG). 2 stretches are compositionally biased toward low complexity: residues 55–79 (QQQQ…PQAQ) and 174–196 (QQQQ…AAGA). Phosphoserine; by CDK9 is present on serine 61. A Phosphoserine modification is found at serine 75. A compositionally biased stretch (polar residues) spans 197 to 207 (PTSSKDSYLGG). Tyrosine 204 carries the post-translational modification Phosphotyrosine; by CSK. Serine 237 is modified (phosphoserine). A Phosphotyrosine; by CSK and TNK2 modification is found at tyrosine 248. Residues 275 to 294 (DDSADKGTEEPAEYTPFKGS) form a disordered region. Tyrosine 288, tyrosine 327, tyrosine 338, and tyrosine 343 each carry phosphotyrosine; by CSK. Tyrosine 344 carries the post-translational modification Phosphotyrosine; by CSK and TNK2. Lysine 367 is covalently cross-linked (Glycyl lysine isopeptide (Lys-Gly) (interchain with G-Cter in SUMO)). Tyrosine 374 carries the post-translational modification Phosphotyrosine; by CSK. Lysine 485 is covalently cross-linked (Glycyl lysine isopeptide (Lys-Gly) (interchain with G-Cter in SUMO)). Phosphotyrosine; by CSK occurs at positions 499 and 516. An interaction with LPXN region spans residues 516–883 (YYFPPQKTCL…GKVKPIYFHT (368 aa)). The segment at residues 523–596 (TCLICGDEAS…AGMTLGARKL (74 aa)) is a DNA-binding region (nuclear receptor). 2 NR C4-type zinc fingers span residues 524–544 (CLIC…CGSC) and 560–584 (CASR…LRKC). Residues 536–626 (YGALTCGSCK…TEESSQKLTV (91 aa)) are interaction with HIPK3. The segment at 556–883 (QKYLCASRND…GKVKPIYFHT (328 aa)) is interaction with CCAR1. The interaction with KAT7 stretch occupies residues 589–883 (MTLGARKLKK…GKVKPIYFHT (295 aa)). The residue at position 615 (serine 615) is a Phosphoserine; by STK4/MST1. In terms of domain architecture, NR LBD spans 633-864 (ECQPIFLNVL…DFPEMMAEII (232 aa)). The 17beta-hydroxy-5alpha-androstan-3-one site is built by asparagine 670 and arginine 717. Glycyl lysine isopeptide (Lys-Gly) (interchain with G-Cter in ubiquitin) cross-links involve residues lysine 810 and lysine 812. A 17beta-hydroxy-5alpha-androstan-3-one-binding site is contributed by threonine 842. A Phosphotyrosine; by CSK modification is found at tyrosine 880.

This sequence belongs to the nuclear hormone receptor family. NR3 subfamily. Binds DNA as a homodimer. Part of a ternary complex containing AR, EFCAB6/DJBP and PARK7. Interacts with HIPK3 and NR0B2 in the presence of androgen. The ligand binding domain interacts with KAT7/HBO1 in the presence of dihydrotestosterone. Interacts with EFCAB6/DJBP, PQBP1, RANBP9, RBAK, SPDEF, SRA1, TGFB1I1 and RREB1. Interacts with ZMIZ1/ZIMP10 and ZMIZ2/ZMIP7 which both enhance its transactivation activity. Interacts with SLC30A9 and RAD54L2/ARIP4. Interacts with MACROD1 (via macro domain). Interacts via the ligand-binding domain with LXXLL and FXXLF motifs from NCOA1, NCOA2, NCOA3 and MAGEA11. Interacts (via nuclear receptor DNA binding domain and nuclear receptor ligand binding domain) with NCOA4. The AR N-terminal poly-Gln region binds Ran resulting in enhancement of AR-mediated transactivation. Ran-binding decreases as the poly-Gln length increases. Interacts with HIP1 (via coiled coil domain). Interacts (via ligand-binding domain) with TRIM68. Interacts with TNK2. Interacts with USP26. Interacts with RNF6. Interacts (regulated by RNF6 probably through polyubiquitination) with RNF14; regulates AR transcriptional activity. Interacts with PRMT2 and TRIM24. Interacts with RACK1. Interacts with RANBP10; this interaction enhances dihydrotestosterone-induced AR transcriptional activity. Interacts with PRPF6 in a hormone-independent way; this interaction enhances dihydrotestosterone-induced AR transcriptional activity. Interacts with STK4/MST1. Interacts with ZIPK/DAPK3. Interacts with LPXN. Interacts with MAK. Part of a complex containing AR, MAK and NCOA3. Interacts with CRY1. Interacts with CCAR1 and GATA2. Interacts with ZNF318. Interacts with BUD31. Interacts with ARID4A. Interacts with ARID4B. Interacts (via NR LBD domain) with ZBTB7A; the interaction is direct and androgen-dependent. Interacts with NCOR1. Interacts with NCOR2. Interacts with CRY2 in a ligand-dependent manner. Phosphorylated in prostate cancer cells in response to several growth factors including EGF. Phosphorylation is induced by c-Src kinase (CSK). Tyr-499 is one of the major phosphorylation sites and an increase in phosphorylation and Src kinase activity is associated with prostate cancer progression. Phosphorylation by TNK2 enhances the DNA-binding and transcriptional activity. Phosphorylation at Ser-61 by CDK9 regulates AR promoter selectivity and cell growth. In terms of processing, sumoylated on Lys-367 (major) and Lys-485. Ubiquitinated. Deubiquitinated by USP26. 'Lys-6' and 'Lys-27'-linked polyubiquitination by RNF6 modulates AR transcriptional activity and specificity. Post-translationally, palmitoylated by ZDHHC7 and ZDHHC21. Palmitoylation is required for plasma membrane targeting and for rapid intracellular signaling via ERK and AKT kinases and cAMP generation.

The protein localises to the nucleus. It is found in the cytoplasm. Its function is as follows. Steroid hormone receptors are ligand-activated transcription factors that regulate eukaryotic gene expression and affect cellular proliferation and differentiation in target tissues. Transcription factor activity is modulated by bound coactivator and corepressor proteins like ZBTB7A that recruits NCOR1 and NCOR2 to the androgen response elements/ARE on target genes, negatively regulating androgen receptor signaling and androgen-induced cell proliferation. Transcription activation is also down-regulated by NR0B2. Activated, but not phosphorylated, by HIPK3 and ZIPK/DAPK3. In Eulemur fulvus collaris (Collared brown lemur), this protein is Androgen receptor (AR).